The following is a 115-amino-acid chain: Tyrosine-protein phosphatase 24 (115 aa).

Positions 1–115 (WMMIVEQKCR…ETGSDAPMVV (115 aa)) constitute a Tyrosine-protein phosphatase domain. Position 83 (Asp-83) interacts with substrate.

It belongs to the protein-tyrosine phosphatase family.

It carries out the reaction O-phospho-L-tyrosyl-[protein] + H2O = L-tyrosyl-[protein] + phosphate. The chain is Tyrosine-protein phosphatase 24 (STY-24) from Styela plicata (Wrinkled sea squirt).